The primary structure comprises 651 residues: Acid beta-fructofuranosidase (651 aa).

The Cytoplasmic segment spans residues 1–23; the sequence is MEHHKPLLPTSSHAAPNPRTRKD. Residues 1 to 103 constitute a propeptide, removed in mature form; it reads MEHHKPLLPT…LFSGEGGASE (103 aa). A helical; Signal-anchor for type II membrane protein membrane pass occupies residues 24–44; the sequence is LLLLLCALLFLSSLVAFGRNR. At 45–651 the chain is on the lumenal side; that stretch reads ASNVPHDHVS…PFPFNPDQKN (607 aa). The interval 48 to 76 is disordered; that stretch reads VPHDHVSSSASNHQQEHQSPTSLPSSKWH. The segment covering 54–72 has biased composition (polar residues); that stretch reads SSSASNHQQEHQSPTSLPS. Substrate-binding positions include 127 to 130, Q146, W154, and 189 to 190; these read WMND and WT. D130 is a catalytic residue. N210 carries N-linked (GlcNAc...) asparagine glycosylation. Residue 253–254 coordinates substrate; it reads RD. N275 is a glycosylation site (N-linked (GlcNAc...) asparagine). Substrate-binding residues include E308 and D343. C500 and C548 are oxidised to a cystine. The N-linked (GlcNAc...) asparagine glycan is linked to N620.

Belongs to the glycosyl hydrolase 32 family. May be present in two forms, a 70 kDa monomer and a heterodimer of the 30 kDa and 38 kDa subunits. The ratio of the levels of the two forms within cells appears to be regulated developmentally.

The protein resides in the membrane. It is found in the vacuole lumen. The catalysed reaction is Hydrolysis of terminal non-reducing beta-D-fructofuranoside residues in beta-D-fructofuranosides.. It functions in the pathway glycan biosynthesis; sucrose metabolism. The protein is Acid beta-fructofuranosidase of Phaseolus vulgaris (Kidney bean).